A 353-amino-acid polypeptide reads, in one-letter code: Photosystem II protein D1 (353 aa).

Thr2 carries the N-acetylthreonine modification. Residue Thr2 is modified to Phosphothreonine. 3 helical membrane-spanning segments follow: residues 29 to 46 (YIGW…TATS), 118 to 133 (HFLL…EWEL), and 142 to 156 (WIAV…AATA). His118 is a binding site for chlorophyll a. Residue Tyr126 participates in pheophytin a binding. [CaMn4O5] cluster is bound by residues Asp170 and Glu189. Residues 197–218 (FHMLGVAGVFGGSLFSAMHGSL) form a helical membrane-spanning segment. Residue His198 coordinates chlorophyll a. A quinone is bound by residues His215 and 264-265 (SF). Fe cation is bound at residue His215. His272 lines the Fe cation pocket. The chain crosses the membrane as a helical span at residues 274–288 (FLAAWPVVGIWFTAL). His332, Glu333, Asp342, and Ala344 together coordinate [CaMn4O5] cluster. A propeptide spanning residues 345–353 (AVEAPAVNG) is cleaved from the precursor.

This sequence belongs to the reaction center PufL/M/PsbA/D family. As to quaternary structure, PSII is composed of 1 copy each of membrane proteins PsbA, PsbB, PsbC, PsbD, PsbE, PsbF, PsbH, PsbI, PsbJ, PsbK, PsbL, PsbM, PsbT, PsbX, PsbY, PsbZ, Psb30/Ycf12, at least 3 peripheral proteins of the oxygen-evolving complex and a large number of cofactors. It forms dimeric complexes. The D1/D2 heterodimer binds P680, chlorophylls that are the primary electron donor of PSII, and subsequent electron acceptors. It shares a non-heme iron and each subunit binds pheophytin, quinone, additional chlorophylls, carotenoids and lipids. D1 provides most of the ligands for the Mn4-Ca-O5 cluster of the oxygen-evolving complex (OEC). There is also a Cl(-1) ion associated with D1 and D2, which is required for oxygen evolution. The PSII complex binds additional chlorophylls, carotenoids and specific lipids. is required as a cofactor. Tyr-161 forms a radical intermediate that is referred to as redox-active TyrZ, YZ or Y-Z. In terms of processing, C-terminally processed by CTPA; processing is essential to allow assembly of the oxygen-evolving complex and thus photosynthetic growth.

Its subcellular location is the plastid. The protein resides in the chloroplast thylakoid membrane. It carries out the reaction 2 a plastoquinone + 4 hnu + 2 H2O = 2 a plastoquinol + O2. Functionally, photosystem II (PSII) is a light-driven water:plastoquinone oxidoreductase that uses light energy to abstract electrons from H(2)O, generating O(2) and a proton gradient subsequently used for ATP formation. It consists of a core antenna complex that captures photons, and an electron transfer chain that converts photonic excitation into a charge separation. The D1/D2 (PsbA/PsbD) reaction center heterodimer binds P680, the primary electron donor of PSII as well as several subsequent electron acceptors. In Marchantia polymorpha (Common liverwort), this protein is Photosystem II protein D1.